The sequence spans 79 residues: Small ribosomal subunit protein bS18 (79 aa).

This sequence belongs to the bacterial ribosomal protein bS18 family. As to quaternary structure, part of the 30S ribosomal subunit. Forms a tight heterodimer with protein bS6.

Binds as a heterodimer with protein bS6 to the central domain of the 16S rRNA, where it helps stabilize the platform of the 30S subunit. The protein is Small ribosomal subunit protein bS18 of Ureaplasma urealyticum serovar 10 (strain ATCC 33699 / Western).